A 445-amino-acid chain; its full sequence is MVVRKVGKYELGRTIGEGTFAKVKFAQNTETGESVAMKIVDRSTIIKRKMVDQIKREISIMKLVRHPCVVRLYEVLASRTKIYIILEYITGGELFDKIVRNGRLSESEARKYFHQLIDGVDYCHSKGVYHRDLKPENLLLDSQGNLKISDFGLSALPEQGVTILKTTCGTPNYVAPEVLSHKGYNGAVADIWSCGVILYVLMAGYLPFDEMDLPTLYSKIDKAEFSCPSYFALGAKSLINRILDPNPETRITIAEIRKDEWFLKDYTPVQLIDYEHVNLDDVYAAFDDPEEQTYAQDGTRDTGPLTLNAFDLIILSQGLNLATLFDRGKDSMKHQTRFISHKPANVVLSSMEVVSQSMGFKTHIRNYKMRVEGLSANKTSHFSVILEVFKVAPSILMVDIQNAAGDAEEYLKFYKTFCSKLDDIIWKPPDASMRNRVTKAKSKRR.

The Protein kinase domain occupies 9 to 262; sequence YELGRTIGEG…IAEIRKDEWF (254 aa). ATP-binding positions include 15-23 and lysine 38; that span reads IGEGTFAKV. The Proton acceptor role is filled by aspartate 132. The activation loop stretch occupies residues 150–177; it reads DFGLSALPEQGVTILKTTCGTPNYVAPE. At serine 154 the chain carries Phosphoserine. Threonine 166 is modified (phosphothreonine). The NAF domain maps to 302–326; it reads TGPLTLNAFDLIILSQGLNLATLFD. Residues 333-362 are PPI; it reads KHQTRFISHKPANVVLSSMEVVSQSMGFKT.

This sequence belongs to the protein kinase superfamily. CAMK Ser/Thr protein kinase family. SNF1 subfamily. As to quaternary structure, interacts with CBL1 and CBL9. Requires Mn(2+) as cofactor. In terms of tissue distribution, mostly expressed in roots, and, to a lower extent, in leaves, stems, flowers, and siliques.

The enzyme catalyses L-seryl-[protein] + ATP = O-phospho-L-seryl-[protein] + ADP + H(+). It carries out the reaction L-threonyl-[protein] + ATP = O-phospho-L-threonyl-[protein] + ADP + H(+). Its function is as follows. CIPK serine-threonine protein kinases interact with CBL proteins. Binding of a CBL protein to the regulatory NAF domain of CIPK protein lead to the activation of the kinase in a calcium-dependent manner. This Arabidopsis thaliana (Mouse-ear cress) protein is CBL-interacting serine/threonine-protein kinase 8 (CIPK8).